The chain runs to 100 residues: Carboxysome shell vertex protein CcmL (100 aa).

A BMV domain is found at 1–83 (MQLAKVLGTV…LDAMVVGIID (83 aa)).

It belongs to the CcmL/EutN family. CcmL subfamily. Homopentamer. Interacts with full-length CcmM.

It is found in the carboxysome. Probably forms vertices in the carboxysome, a polyhedral inclusion where RuBisCO (ribulose bisphosphate carboxylase, rbcL-rbcS) is sequestered. Has been modeled to induce curvature upon insertion into an otherwise flat hexagonal molecular layer of CcmK subunits. This chain is Carboxysome shell vertex protein CcmL, found in Synechocystis sp. (strain ATCC 27184 / PCC 6803 / Kazusa).